A 133-amino-acid chain; its full sequence is MSRHKSKSIPGRNLRLADQIQKDLAGIIQREIDMTRAGLITLSGVELSADYAHAKVYFTVLGAEPDTAAALLNEKAGWLHSQLYKLLHIHTVPTLRFVHDPQITRGIEMSMLIDRANRPGPHSGVPDEPEDQS.

It belongs to the RbfA family. In terms of assembly, monomer. Binds 30S ribosomal subunits, but not 50S ribosomal subunits or 70S ribosomes.

It is found in the cytoplasm. Its function is as follows. One of several proteins that assist in the late maturation steps of the functional core of the 30S ribosomal subunit. Associates with free 30S ribosomal subunits (but not with 30S subunits that are part of 70S ribosomes or polysomes). Required for efficient processing of 16S rRNA. May interact with the 5'-terminal helix region of 16S rRNA. The protein is Ribosome-binding factor A of Bordetella bronchiseptica (strain ATCC BAA-588 / NCTC 13252 / RB50) (Alcaligenes bronchisepticus).